Consider the following 721-residue polypeptide: Catalase-peroxidase 1 (721 aa).

A cross-link (tryptophyl-tyrosyl-methioninium (Trp-Tyr) (with M-249)) is located at residues 98-223; that stretch reads WHAAGSYRVA…LAAVQMGLIY (126 aa). The active-site Proton acceptor is H99. A cross-link (tryptophyl-tyrosyl-methioninium (Tyr-Met) (with W-98)) is located at residues 223–249; sequence YVNPEGVNGQPDPLRTAQDVRVTFGRM. H264 is a heme b binding site.

Belongs to the peroxidase family. Peroxidase/catalase subfamily. Homodimer or homotetramer. It depends on heme b as a cofactor. Post-translationally, formation of the three residue Trp-Tyr-Met cross-link is important for the catalase, but not the peroxidase activity of the enzyme.

The catalysed reaction is H2O2 + AH2 = A + 2 H2O. It catalyses the reaction 2 H2O2 = O2 + 2 H2O. Functionally, bifunctional enzyme with both catalase and broad-spectrum peroxidase activity. The protein is Catalase-peroxidase 1 of Legionella pneumophila subsp. pneumophila (strain Philadelphia 1 / ATCC 33152 / DSM 7513).